The following is a 132-amino-acid chain: Translation initiation factor 5A (132 aa).

Residue lysine 36 is modified to Hypusine.

Belongs to the eIF-5A family.

It is found in the cytoplasm. Its function is as follows. Functions by promoting the formation of the first peptide bond. This chain is Translation initiation factor 5A (eIF5A), found in Pyrobaculum islandicum (strain DSM 4184 / JCM 9189 / GEO3).